A 481-amino-acid chain; its full sequence is Aspartyl/glutamyl-tRNA(Asn/Gln) amidotransferase subunit B (481 aa).

This sequence belongs to the GatB/GatE family. GatB subfamily. As to quaternary structure, heterotrimer of A, B and C subunits.

It catalyses the reaction L-glutamyl-tRNA(Gln) + L-glutamine + ATP + H2O = L-glutaminyl-tRNA(Gln) + L-glutamate + ADP + phosphate + H(+). The enzyme catalyses L-aspartyl-tRNA(Asn) + L-glutamine + ATP + H2O = L-asparaginyl-tRNA(Asn) + L-glutamate + ADP + phosphate + 2 H(+). In terms of biological role, allows the formation of correctly charged Asn-tRNA(Asn) or Gln-tRNA(Gln) through the transamidation of misacylated Asp-tRNA(Asn) or Glu-tRNA(Gln) in organisms which lack either or both of asparaginyl-tRNA or glutaminyl-tRNA synthetases. The reaction takes place in the presence of glutamine and ATP through an activated phospho-Asp-tRNA(Asn) or phospho-Glu-tRNA(Gln). The sequence is that of Aspartyl/glutamyl-tRNA(Asn/Gln) amidotransferase subunit B from Marinomonas sp. (strain MWYL1).